An 845-amino-acid chain; its full sequence is RNA-directed RNA polymerase (845 aa).

Residue 248 to 255 coordinates GTP; it reads GLPYIGKT. One can recognise a RdRp catalytic domain in the interval 384–588; it reads MIYADNIYIL…ENERLIASAA (205 aa). 2 disordered regions span residues 686 to 706 and 799 to 845; these read PLDS…KKTL and AGKS…RRNQ. Residues 833–845 show a composition bias toward basic residues; the sequence is KNAKRREKQRRNQ.

In terms of assembly, interacts with VP3 in the cytoplasm. In terms of processing, exists in multiple phosphorylated forms.

It localises to the virion. The enzyme catalyses RNA(n) + a ribonucleoside 5'-triphosphate = RNA(n+1) + diphosphate. Functionally, RNA-dependent RNA polymerase which is found both free and covalently attached to the genomic RNA. May also contain guanylyl and methyl transferase activities. The protein is RNA-directed RNA polymerase (VP1) of Oncorhynchus mykiss (Rainbow trout).